Reading from the N-terminus, the 429-residue chain is Adenylosuccinate synthetase (429 aa).

GTP contacts are provided by residues 12 to 18 and 40 to 42; these read GDEGKGK and GHT. Asp-13 functions as the Proton acceptor in the catalytic mechanism. Asp-13 and Gly-40 together coordinate Mg(2+). Residues 13-16, 38-41, Thr-128, Arg-142, Gln-223, Thr-238, and Arg-302 contribute to the IMP site; these read DEGK and NAGH. His-41 (proton donor) is an active-site residue. Residue 298–304 coordinates substrate; sequence VNTGRPR. GTP contacts are provided by residues Arg-304, 330-332, and 412-414; these read KLD and GVG.

This sequence belongs to the adenylosuccinate synthetase family. In terms of assembly, homodimer. The cofactor is Mg(2+).

It localises to the cytoplasm. The enzyme catalyses IMP + L-aspartate + GTP = N(6)-(1,2-dicarboxyethyl)-AMP + GDP + phosphate + 2 H(+). Its pathway is purine metabolism; AMP biosynthesis via de novo pathway; AMP from IMP: step 1/2. In terms of biological role, plays an important role in the de novo pathway of purine nucleotide biosynthesis. Catalyzes the first committed step in the biosynthesis of AMP from IMP. The sequence is that of Adenylosuccinate synthetase from Paenarthrobacter aurescens (strain TC1).